The sequence spans 319 residues: MKAMNKVWVIGDASVDLVPEKQNSYLKCPGGASANVGVCVARLGGECGFIGCLGDDDAGRFLRQVFQDNGVDVTFLRLDADLTSAVLIVNLTADGERSFTYLVHPGADTYVSPQDLPPFRQYEWFYFSSIGLTDRPAREACLEGARRMREAGGYVLFDVNLRSKMWGNTDEIPELIARSAALASICKVSADELCQLSGASHWQDARYYLRDLGCDTTIISLGADGALLITAEGEFHFPAPRVDVVDTTGAGDAFVGGLLFTLSRANCWDHALLAEAISNANACGAMAVTAKGAMTALPFPDQLNTFLSSHSLAQAMTVK.

Positions 16, 31, and 101 each coordinate 5-amino-1-(beta-D-ribosyl)imidazole. 158-160 contributes to the ATP binding site; sequence DVN. Arg162 contributes to the 5-amino-1-(beta-D-ribosyl)imidazole binding site. K(+) is bound by residues Ala180, Ala181, and Ala183. ATP contacts are provided by Lys187 and Glu192. K(+) is bound at residue Gly213. 220 to 225 serves as a coordination point for ATP; sequence SLGADG. Residues Asp246 and Thr248 each coordinate K(+). Residue Asp252 coordinates 5-amino-1-(beta-D-ribosyl)imidazole. The active-site Proton acceptor is Asp252. Residue Asn281 participates in ATP binding. Residues Ala287, Ala290, and Gly292 each contribute to the K(+) site.

This sequence belongs to the carbohydrate kinase PfkB family. Homodimer.

The enzyme catalyses 5-amino-1-(beta-D-ribosyl)imidazole + ATP = 5-amino-1-(5-phospho-beta-D-ribosyl)imidazole + ADP + H(+). Its activity is regulated as follows. Potassium may regulate kinase activity. In terms of biological role, phosphorylates 5-amino-1-(beta-D-ribosyl)imidazole (AIRs) to form 5-amino-1-(5-phospho-beta-D-ribosyl)imidazole (AIR), an important intermediate in the purine and thiamine biosynthetic pathways. It allows the use of exogenous aminoimidazole riboside (AIRs) to satisfy the cellular requirement for purines and thiamine. The protein is Aminoimidazole riboside kinase of Salmonella typhimurium (strain LT2 / SGSC1412 / ATCC 700720).